We begin with the raw amino-acid sequence, 925 residues long: MPHKIGFVVVSSSGHEDGFSARELMIHAPTVSGWRSPRFCQFPQEIVLQMVERCRIRKLQLLAHQYMISSKIEFYISESLPEYFAPYQAERFRRLGYVSLCDNEKTGCKARELKSVYVDAVGQFLKLIFHQNHVNKYNIYNQVALVAINIIGDPADFSDESNTASREKLIDHYLGHNSEDPALEGTYARKSDYISPLDDLAFDMYQDPEVAQIIRKLDERKREAVQKERYDYAKKLKQAIADLQKVGERLGRYEVEKRCAVEKEDYDLAKEKKQQMEQYRAEVYEQLELHSLLDAELMRRPFDLPLQPLARSGSPCHQKPMPSLPQLEERGTENQFAEPFLQEKPSSYSLTISPQHSAVDPLLPATDPHPKINAESLPYDERPLPAIRKHYGEAVVEPEMSNADISDARRGGMLGEPEPLTEKALREASSAIDVLGETLVAEAYCKTWSYREDALLALSKKLMEMPVGTPKEDLKNTLRASVFLVRRAIKDIVTSVFQASLKLLKMIITQYIPKHKLSKLETAHCVERTIPVLLTRTGDSSARLRVTAANFIQEMALFKEVKSLQIIPSYLVQPLKANSSVHLAMSQMGLLARLLKDLGTGSSGFTIDNVMKFSVSALEHRVYEVRETAVRIILDMYRQHQASILEYLPPDDSNTRRNILYKTIFEGFAKIDGRATDAEMRARRKAATEEAEKQKKEEIKALQGQLAALKEIQAEVQEKESDAVKPKNQDIQGGKAAPAEALGIPDEHYLDNLCIFCGERSESFTEEGLDLHYWKHCLMLTRCDHCKQVVEISSLTEHLLTECDKKDGFGKCYRCSEAVFKEELPRHIKHKDCNPAKPEKLANRCPLCHENFSPGEEAWKAHLMGPAGCTMNLRKTHILQKAPALQPGKSSAVAASGPLGSKAGSKIPTPKGGLSKSSSRTYAKR.

The stretch at 209 to 289 forms a coiled coil; sequence EVAQIIRKLD…RAEVYEQLEL (81 aa). HEAT repeat units lie at residues 529 to 567 and 604 to 640; these read TIPV…LQII and GFTI…YRQH. Positions 677-725 form a coiled coil; sequence DAEMRARRKAATEEAEKQKKEEIKALQGQLAALKEIQAEVQEKESDAVK. The interval 883–925 is disordered; the sequence is PALQPGKSSAVAASGPLGSKAGSKIPTPKGGLSKSSSRTYAKR. The segment covering 915 to 925 has biased composition (polar residues); it reads SKSSSRTYAKR.

As to quaternary structure, interacts with CCP110 and CEP97. Interacts with ARMC9, TOGARAM1, CCDC66 and CSPP1.

It is found in the cell projection. The protein resides in the cilium. It localises to the cytoplasm. The protein localises to the cytoskeleton. Its subcellular location is the microtubule organizing center. It is found in the centrosome. The protein resides in the centriole. It localises to the spindle pole. In terms of biological role, required for ciliogenesis and for structural integrity at the ciliary tip. The sequence is that of Centrosomal protein of 104 kDa (CEP104) from Homo sapiens (Human).